The primary structure comprises 365 residues: Succinyl-diaminopimelate desuccinylase (365 aa).

Position 64 (His-64) interacts with Zn(2+). Residue Asp-66 is part of the active site. Asp-95 contributes to the Zn(2+) binding site. The Proton acceptor role is filled by Glu-125. The Zn(2+) site is built by Glu-126, Glu-154, and His-339.

This sequence belongs to the peptidase M20A family. DapE subfamily. Homodimer. Zn(2+) serves as cofactor. It depends on Co(2+) as a cofactor.

It carries out the reaction N-succinyl-(2S,6S)-2,6-diaminopimelate + H2O = (2S,6S)-2,6-diaminopimelate + succinate. It participates in amino-acid biosynthesis; L-lysine biosynthesis via DAP pathway; LL-2,6-diaminopimelate from (S)-tetrahydrodipicolinate (succinylase route): step 3/3. In terms of biological role, catalyzes the hydrolysis of N-succinyl-L,L-diaminopimelic acid (SDAP), forming succinate and LL-2,6-diaminopimelate (DAP), an intermediate involved in the bacterial biosynthesis of lysine and meso-diaminopimelic acid, an essential component of bacterial cell walls. This chain is Succinyl-diaminopimelate desuccinylase, found in Campylobacter fetus subsp. fetus (strain 82-40).